Here is a 235-residue protein sequence, read N- to C-terminus: 2-C-methyl-D-erythritol 4-phosphate cytidylyltransferase (235 aa).

It belongs to the IspD/TarI cytidylyltransferase family. IspD subfamily.

The catalysed reaction is 2-C-methyl-D-erythritol 4-phosphate + CTP + H(+) = 4-CDP-2-C-methyl-D-erythritol + diphosphate. The protein operates within isoprenoid biosynthesis; isopentenyl diphosphate biosynthesis via DXP pathway; isopentenyl diphosphate from 1-deoxy-D-xylulose 5-phosphate: step 2/6. In terms of biological role, catalyzes the formation of 4-diphosphocytidyl-2-C-methyl-D-erythritol from CTP and 2-C-methyl-D-erythritol 4-phosphate (MEP). The chain is 2-C-methyl-D-erythritol 4-phosphate cytidylyltransferase from Ectopseudomonas mendocina (strain ymp) (Pseudomonas mendocina).